A 227-amino-acid polypeptide reads, in one-letter code: Ribosome-recycling factor, chloroplastic (227 aa).

A chloroplast-targeting transit peptide spans 1–34 (WTAAANYVKIKVGTGKFARKTVVLSQKRTGTLKC). Residues 167–212 (KVALRNIRRDAIKSYDKLEKEKKLSEDNVKDLSSDLQKVIDEYIKK) adopt a coiled-coil conformation.

It belongs to the RRF family.

The protein localises to the plastid. Its subcellular location is the chloroplast. In terms of biological role, responsible for the release of ribosomes from messenger RNA at the termination of chloroplastic protein biosynthesis. This Daucus carota (Wild carrot) protein is Ribosome-recycling factor, chloroplastic (RRF).